We begin with the raw amino-acid sequence, 328 residues long: Fructosamine deglycase FrlB (328 aa).

SIS domains lie at 15-153 and 181-311; these read FLQD…VLEN and NAKQ…ELAE.

In terms of assembly, homooctamer.

In terms of biological role, catalyzes the conversion of a range of fructosamine 6-phosphates to glucose 6-phosphate and a free amino acid. This Bacillus subtilis (strain 168) protein is Fructosamine deglycase FrlB (frlB).